Here is a 528-residue protein sequence, read N- to C-terminus: Exodeoxyribonuclease 7 large subunit (528 aa).

Residues 486–528 (QGDRDAVIDGESSGVLPPSAAPAPTRPTPRPKPASSSDQGSLF) are disordered. The span at 504-517 (SAAPAPTRPTPRPK) shows a compositional bias: pro residues.

It belongs to the XseA family. In terms of assembly, heterooligomer composed of large and small subunits.

It is found in the cytoplasm. The enzyme catalyses Exonucleolytic cleavage in either 5'- to 3'- or 3'- to 5'-direction to yield nucleoside 5'-phosphates.. Bidirectionally degrades single-stranded DNA into large acid-insoluble oligonucleotides, which are then degraded further into small acid-soluble oligonucleotides. In Caulobacter sp. (strain K31), this protein is Exodeoxyribonuclease 7 large subunit.